A 364-amino-acid chain; its full sequence is Aminomethyltransferase (364 aa).

The protein belongs to the GcvT family. As to quaternary structure, the glycine cleavage system is composed of four proteins: P, T, L and H.

The catalysed reaction is N(6)-[(R)-S(8)-aminomethyldihydrolipoyl]-L-lysyl-[protein] + (6S)-5,6,7,8-tetrahydrofolate = N(6)-[(R)-dihydrolipoyl]-L-lysyl-[protein] + (6R)-5,10-methylene-5,6,7,8-tetrahydrofolate + NH4(+). In terms of biological role, the glycine cleavage system catalyzes the degradation of glycine. This Escherichia coli (strain 55989 / EAEC) protein is Aminomethyltransferase.